Here is a 983-residue protein sequence, read N- to C-terminus: MGMRPAARMPKLTRRSRTLIMVALGVIVLLLAGPRLVDAYVEWLWFGELGYRSVFSTVLVTRVVVFLVAGLVVGGIVFAGLAVAYRTRPVFVPSHDNDPVARYRAMALSRLRLIGVGIPAAIGLLAGIIAQSYWVRIQLFLHGDNFGIRDPQFGKDLGFYAFELPFYRLVLSYVFVAVFLAFVVNLLAHYIFGGIRLSGRTGALSRLARLQLVSLVGVLVLLKAVAYWLDRYELLSRTRSSKPFTGAGYTDINAVQPAKLILIAIALICAAAVFSAITLRDFRIPAIGLVLLMLSSLIVGTGWPLIVEQLIAKPDAVRKESEYIRRSITATRHAYGLTEDVVTYRNYIGDAPAIAQQIATDHATTSNIRLLDPTIVSPAFTQFQRGKNFYYFPDQLSIDRYLDKKGNLRDYVVAARELNPDRLIDNQRDWINRHTVYTHGNGFIASPANTVRGIANDPNQNGGYPQFLVNVVGNGTVVSEGPARLDQPRVYFGPVISNTSADYAIVGKNGDDREYDYETNTDTKRYTYAGSGGVPIGSWLSRSVFAAKFAERNFLFSSVIGSNSKILFNRDPAQRVEAVAPWLTTDSSVYPAIVNKRLVWIIDGYTTLDNYPYSERTSLSSATADSTEVAFNRLAPDKRVAYIRNSVKATVDAYDGAVTLYQQDEYDPVLKVWMKVFPGTVRPKGDITPELAEHLRYPEDLFKVQRMLLAKYHVNDPGTFFNTSDFWDVPLDPNPTASSYQPPYYIVAKNILKNDRSASYQLTSAMNRFKQDFLAAYISASSDPETYGKITVLTIPGNVNGPKLANNAITTDPAVSQDLGVIGRDNQNRIRWGNLLTLPVAQGGLLYVEPVYASPGVSDAASSYPRLIRVAMMYNDKIGYGPTVGDALTGLFGPGAASAATGIEPTEAVPPKSPAGSSTPPIAVVPSAPDGSVALSAAKAAALQEIQAVIGAAREAQKKGDFVAYGSALQRLDDAITKFNSTK.

Helical transmembrane passes span 19 to 39 (LIMV…LVDA), 63 to 83 (VVVF…GLAV), 113 to 133 (LIGV…AQSY), 175 to 195 (FVAV…FGGI), 210 to 230 (LQLV…YWLD), 259 to 279 (KLIL…AITL), and 287 to 307 (IGLV…PLIV).

It belongs to the UPF0182 family.

It localises to the cell membrane. The polypeptide is UPF0182 protein MLBr00644 (Mycobacterium leprae (strain Br4923)).